The chain runs to 1812 residues: Putative surface cell antigen sca2 (1812 aa).

An N-terminal signal peptide occupies residues 1-17 (MSTCLLTSSFLSTSARA). Polar residues-rich tracts occupy residues 344-357 (FLNN…STGR) and 371-382 (MSNQSIHNTGTS). 3 disordered regions span residues 344 to 382 (FLNN…TGTS), 648 to 691 (LEQT…QGFS), and 1338 to 1462 (KQEN…KKDV). The segment covering 656-685 (PNPPPLPLNGGIPNPPPLPLNGSMPPPPPL) has biased composition (pro residues). 2 stretches are compositionally biased toward basic and acidic residues: residues 1349–1367 (STKD…EQSD) and 1382–1393 (SKNDKSSDDKKS). Residues 1401–1416 (DEDDTGYATDEEELEE) are compositionally biased toward acidic residues. Residues 1417–1455 (SNSTTNEELEESNSTTNEELEESNSTTNEELEESNSTTN) show a composition bias toward low complexity. Positions 1533-1812 (ETSINRGVWI…QGLIKLKVNL (280 aa)) constitute an Autotransporter domain.

Its subcellular location is the cell outer membrane. This Rickettsia sibirica (strain ATCC VR-151 / 246) protein is Putative surface cell antigen sca2 (sca2).